The following is a 147-amino-acid chain: MDTLAAIGRWLSKQHVVTWCVSREDELWCANAFYVYDPDTVAFYLLSEEHTRHGQMTGQRAKVAGTVNGQPKTVALIRGVQFKGEIRRLSGDEEARMRQRYVKRFPVARMLSAPVWEIRPDEIKFTDNTLGFGKKLHWRRDAGAEQA.

It belongs to the UPF0306 family.

The protein is UPF0306 protein KPN78578_35330 of Klebsiella pneumoniae subsp. pneumoniae (strain ATCC 700721 / MGH 78578).